The sequence spans 170 residues: CASP-like protein 1F1 (170 aa).

The Cytoplasmic segment spans residues 1–16 (MMGDNEGRRTPLLNLG). The chain crosses the membrane as a helical span at residues 17-37 (VQVSMRVLTIGAAMASMWVMI). At 38–62 (TNREVASVYGIAFEAKYSYSSAFRY) the chain is on the extracellular side. The helical transmembrane segment at 63–83 (LVYAQIAVCAATLFTLVWACL) threads the bilayer. The Cytoplasmic portion of the chain corresponds to 84 to 88 (AVRRR). Residues 89 to 109 (GLVFALFFFDLLTTLTAISAF) form a helical membrane-spanning segment. At 110–141 (SAAFAEGYVGKYGNKQAGWLPICGYVHGYCSR) the chain is on the extracellular side. Residues 142–162 (VTISLAMSFASFILLFILTVL) form a helical membrane-spanning segment. Residues 163–170 (TASAARHY) lie on the Cytoplasmic side of the membrane.

It belongs to the Casparian strip membrane proteins (CASP) family. Homodimer and heterodimers. In terms of tissue distribution, in flowers, expressed in the anther wall.

Its subcellular location is the cell membrane. In Arabidopsis thaliana (Mouse-ear cress), this protein is CASP-like protein 1F1.